We begin with the raw amino-acid sequence, 532 residues long: Optineurin (532 aa).

Coiled-coil stretches lie at residues 27 to 143 (SMKN…LKLG) and 195 to 466 (EEVA…EEMM). Residues 502–532 (QPSITVYTCPKCNLTVPDMDTLQIHVMDCIT) form a CCHC NOA-type zinc finger. Cys-510, Cys-513, His-526, and Cys-530 together coordinate Zn(2+).

The protein localises to the cytoplasm. It is found in the perinuclear region. The protein resides in the golgi apparatus. It localises to the trans-Golgi network. Its subcellular location is the cytoplasmic vesicle. The protein localises to the recycling endosome. It is found in the autophagosome. Functionally, probably part of the TNF-alpha signaling pathway that can shift the equilibrium toward induction of cell death. May act by regulating membrane trafficking and cellular morphogenesis. This Xenopus laevis (African clawed frog) protein is Optineurin (optn).